Reading from the N-terminus, the 191-residue chain is Pyridoxal 5'-phosphate synthase subunit PdxT (191 aa).

46-48 (GES) is an L-glutamine binding site. Residue Cys-78 is the Nucleophile of the active site. L-glutamine contacts are provided by residues Arg-105 and 134–135 (IR). Catalysis depends on charge relay system residues His-170 and Glu-172.

The protein belongs to the glutaminase PdxT/SNO family. In the presence of PdxS, forms a dodecamer of heterodimers. Only shows activity in the heterodimer.

It catalyses the reaction aldehydo-D-ribose 5-phosphate + D-glyceraldehyde 3-phosphate + L-glutamine = pyridoxal 5'-phosphate + L-glutamate + phosphate + 3 H2O + H(+). The enzyme catalyses L-glutamine + H2O = L-glutamate + NH4(+). Its pathway is cofactor biosynthesis; pyridoxal 5'-phosphate biosynthesis. Its function is as follows. Catalyzes the hydrolysis of glutamine to glutamate and ammonia as part of the biosynthesis of pyridoxal 5'-phosphate. The resulting ammonia molecule is channeled to the active site of PdxS. The polypeptide is Pyridoxal 5'-phosphate synthase subunit PdxT (Carboxydothermus hydrogenoformans (strain ATCC BAA-161 / DSM 6008 / Z-2901)).